The primary structure comprises 382 residues: Lipid-A-disaccharide synthase (382 aa).

It belongs to the LpxB family.

It carries out the reaction 2-N,3-O-bis[(3R)-3-hydroxytetradecanoyl]-alpha-D-glucosaminyl 1-phosphate + UDP-2-N,3-O-bis[(3R)-3-hydroxytetradecanoyl]-alpha-D-glucosamine = lipid A disaccharide (E. coli) + UDP + H(+). It catalyses the reaction a lipid X + a UDP-2-N,3-O-bis[(3R)-3-hydroxyacyl]-alpha-D-glucosamine = a lipid A disaccharide + UDP + H(+). Its pathway is glycolipid biosynthesis; lipid IV(A) biosynthesis; lipid IV(A) from (3R)-3-hydroxytetradecanoyl-[acyl-carrier-protein] and UDP-N-acetyl-alpha-D-glucosamine: step 5/6. Functionally, condensation of UDP-2,3-diacylglucosamine and 2,3-diacylglucosamine-1-phosphate to form lipid A disaccharide, a precursor of lipid A, a phosphorylated glycolipid that anchors the lipopolysaccharide to the outer membrane of the cell. This chain is Lipid-A-disaccharide synthase, found in Citrobacter koseri (strain ATCC BAA-895 / CDC 4225-83 / SGSC4696).